The chain runs to 160 residues: Large ribosomal subunit protein eL29 (160 aa).

Over residues 1–26 (MAKSKNHTTHNQSRKWHRNGIKKPRS) the composition is skewed to basic residues. Residues 1–32 (MAKSKNHTTHNQSRKWHRNGIKKPRSQRYESL) are disordered. An N6-methyllysine modification is found at lysine 5. Serine 31 is modified (phosphoserine). Lysine 33 carries the N6-acetyllysine modification. A disordered region spans residues 119-160 (CRPKSQAKAQSKAKATAGGTAAAPVPPASAPKGAQAPTKAPQ). The segment covering 121-141 (PKSQAKAQSKAKATAGGTAAA) has biased composition (low complexity).

This sequence belongs to the eukaryotic ribosomal protein eL29 family. In terms of assembly, component of the large ribosomal subunit.

The protein resides in the cytoplasm. Component of the large ribosomal subunit. The ribosome is a large ribonucleoprotein complex responsible for the synthesis of proteins in the cell. This is Large ribosomal subunit protein eL29 (RPL29) from Sus scrofa (Pig).